Here is a 602-residue protein sequence, read N- to C-terminus: Histone-arginine methyltransferase CARM1 (602 aa).

The SAM-dependent MTase PRMT-type domain maps to 117–424 (AVQYFQFYGY…KKQSYDISIV (308 aa)). Gln-130, Arg-139, Gly-163, Glu-185, Glu-214, and Ser-242 together coordinate S-adenosyl-L-methionine. The transactivation domain stretch occupies residues 470-602 (TGGAYTMNTG…ITTNTMHYGS (133 aa)).

Belongs to the class I-like SAM-binding methyltransferase superfamily. Protein arginine N-methyltransferase family. In terms of assembly, homodimer.

The protein resides in the nucleus. The protein localises to the cytoplasm. It localises to the chromosome. It catalyses the reaction L-arginyl-[protein] + 2 S-adenosyl-L-methionine = N(omega),N(omega)-dimethyl-L-arginyl-[protein] + 2 S-adenosyl-L-homocysteine + 2 H(+). Methylates (mono- and asymmetric dimethylation) the guanidino nitrogens of arginyl residues in several proteins involved in DNA packaging, transcription regulation, pre-mRNA splicing, and mRNA stability. Recruited to promoters upon gene activation together with histone acetyltransferases from EP300/P300 and p160 families, methylates histone H3 at 'Arg-17' (H3R17me) and activates transcription via chromatin remodeling. This Xenopus laevis (African clawed frog) protein is Histone-arginine methyltransferase CARM1 (carm1).